A 309-amino-acid polypeptide reads, in one-letter code: Mitochondrial phosphate carrier protein 1, mitochondrial (309 aa).

The Mitochondrial intermembrane segment spans residues 1-15 (MTRVKSKLDEELSSP). The chain crosses the membrane as a helical span at residues 16-36 (WFYTVCTMGGMLSAGTTHLAI). Solcar repeat units follow at residues 16-100 (WFYT…FKTL), 109-193 (NRTS…SVEF), and 210-289 (QQLG…IKVL). At 37-74 (TPLDVLKVNMQVNPVKYNSIPSGFSTLLREHGHSYLWR) the chain is on the mitochondrial matrix side. Residues 75–94 (GWSGKLLGYGVQGGCRFGLY) traverse the membrane as a helical segment. The Mitochondrial intermembrane portion of the chain corresponds to 95 to 111 (EYFKTLYSDVLPNHNRT). A helical transmembrane segment spans residues 112–132 (SIYFLSSASAQIFADMALCPF). The Mitochondrial matrix segment spans residues 133 to 167 (EAIKVRVQTQPMFAKGLLDGFPRVYRSEGLAGFHR). The chain crosses the membrane as a helical span at residues 168 to 187 (GLFPLWCRNLPFSMVMFSTF). At 188–208 (EQSVEFIYQKIIQKRKQDCSK) the chain is on the mitochondrial intermembrane side. The helical transmembrane segment at 209–229 (AQQLGVTCLAGYTAGAVGTII) threads the bilayer. Residues 230-268 (SNPADVVLSSLYNNKAKNVLQAVRNIGFVGLFTRSLPVR) are Mitochondrial matrix-facing. Residues 269-289 (ITIVGPVITLQWFFYDAIKVL) form a helical membrane-spanning segment. The Mitochondrial intermembrane segment spans residues 290-309 (SGFPTSGGVKKPVDAAKLSV).

The protein belongs to the mitochondrial carrier (TC 2.A.29) family. Expressed in stems, leaves and flowers. Strong expression in the stamens of flowers.

It is found in the mitochondrion inner membrane. In terms of biological role, transport of phosphate groups from the cytosol to the mitochondrial matrix. Mediates salt stress tolerance through an ATP-dependent pathway and via modulation of the gibberellin metabolism. The chain is Mitochondrial phosphate carrier protein 1, mitochondrial (MPT1) from Arabidopsis thaliana (Mouse-ear cress).